The sequence spans 1940 residues: MSSDQEMAIFGEAAPYLRKSEKERIEAQNRPFDAKTSVFVAEPKESFVKGTVQSREGGKVTVKTEAGATLTVKEDQVFPMNPPKYDKIEDMAMMTHLHEPAVLYNLKERYAAWMIYTYSGLFCVTVNPYKWLPVYNPEVVTAYRGKKRQEAPPHIFSISDNAYQFMLTDRENQSILITGESGAGKTVNTKRVIQYFATIAVTGEKKKEEATSGKMQGTLEDQIISANPLLEAFGNAKTVRNDNSSRFGKFIRIHFGTTGKLASADIETYLLEKSRVTFQLKAERSYHIFYQITSNKKPELIEMLLITTNPYDYPFVSQGEISVASIDDQEELIATDSAIDILGFTNEEKVSIYKLTGAVMHYGNLKFKQKQREEQAEPDGTEVADKAAYLQSLNSADLLKALCYPRVKVGNEFVTKGQTVEQVTNAVGALAKAVYEKMFLWMVTRINQQLDTKQPRQYFIGVLDIAGFEIFDFNSLEQLCINFTNEKLQQFFNHHMFVLEQEEYKKEGIEWTFIDFGMDLAACIELIEKPMGIFSILEEECMFPKATDTSFKNKLYEQHLGKSANFQKPKVVKGKAEAHFSLIHYAGVVDYNITGWLDKNKDPLNETVVGLYQKSSMKTLAYLFSGAQTAEAEASGGAKKGGKKKGSSFQTVSALFRENLNKLMTNLRSTHPHFVRCIIPNETKTPGAMEHELVLHQLRCNGVLEGIRICRKGFPSRILYADFKQRYKVLNASAIPEGQFIDSKKASEKLLASIDIDHTQYKFGHTKVFFKAGLLGLLEEMRDDKLAQLITRTQARCRGFLARVEYQKMVERRESIFCIQYNIRAFMNVKHWPWMKLFFKIKPLLKSAETEKEMATMKEEFQKTKDELAKSEAKRKELEEKMVTLLKEKNDLQLQVQAEAEGLADAEERCDQLIKTKIQLEAKIKEVTERAEDEEEINAELTAKKRKLEDECSELKKDIDDLELTLAKVEKEKHATENKVKNLTEEMAGLDETIAKLTKEKKALQEAHQQTLDDLQAEEDKVNTLTKAKIKLEQQVDDLEGSLEQEKKLRMDLERAKRKLEGDLKLAQESIMDIENEKQQLDEKLKKKEFEMSNLQSKIEDEQALGIQLQKKIKELQARIEELEEEIEAERASRAKAEKQRSDLSRELEEISERLEEAGGATSAQIEMNKKREAEFQKMRRDLEEATLQHEATAATLRKKHADSVAELGEQIDNLQRVKQKLEKEKSEMKMEIDDLASNVETVSKAKGNLEKMCRTLEDQVSELKSKEEEQQRLINDLTTQRGRLQTESGEFSRQLDEKEALVSQLSRGKLAFTQQIEELKRQLEEEIKAKNALAHALQSSRHDCDLLREQYEEEQESKAELQRALSKANSEVAQWRTKYETDAIQRTEELEEAKKKLAQRLQAAEEHVEAVNAKCASLEKTKQRLQNEVEDLMLDVERTNAACAALDKKQRNFDKILAEWKQKYEETHAELEASQKEARSLGTELFKMKNAYEESLDQLETLKRENKNLQQEISDLTEQIAEGGKRIHELEKIKKQVEQEKSEIQAALEEAEASLEHEEGKILRIQLELNQVKSEIDRKIAEKDEEIDQLKRNHIRVVESMQTMLDAEIRSRNDAIRLKKKMEGDLNEMEIQLNHANRMAAEALRNYRNTQGILKDTQIHLDDALRGQEDLKEQLAMVERRANLLQAEIEELRATLEQTERSRKIAEQELLDASERVQLLHTQNTSLINTKKKLETDISQIQGEMEDIIQEARNAEEKAKKAITDAAMMAEELKKEQDTSAHLERMKKNMEQTVKDLQHRLDEAEQLALKGGKKQIQKLEARVRELEGEVESEQKRNAEAVKGLRKHERRVKELTYQTEEDRKNILRLQDLVDKLQAKVKSYKRQAEEAEEQSNTNLSKFRKLQHELEEAEERADIAESQVNKLRVKSREVHTKVISEE.

A Myosin N-terminal SH3-like domain is found at 33–82; the sequence is DAKTSVFVAEPKESFVKGTVQSREGGKVTVKTEAGATLTVKEDQVFPMNP. 2 positions are modified to phosphothreonine: Thr-64 and Thr-69. Positions 86–783 constitute a Myosin motor domain; it reads DKIEDMAMMT…LLGLLEEMRD (698 aa). The residue at position 130 (Lys-130) is an N6,N6,N6-trimethyllysine. 179–186 lines the ATP pocket; it reads GESGAGKT. Phosphotyrosine is present on Tyr-389. Residue Ser-392 is modified to Phosphoserine. At Thr-419 the chain carries Phosphothreonine. Ser-625 carries the post-translational modification Phosphoserine. An actin-binding region spans residues 660–682; sequence LNKLMTNLRSTHPHFVRCIIPNE. His-758 bears the Pros-methylhistidine mark. The actin-binding stretch occupies residues 762 to 776; the sequence is KFGHTKVFFKAGLLG. An IQ domain is found at 786–815; sequence LAQLITRTQARCRGFLARVEYQKMVERRES. Residues 844-1940 adopt a coiled-coil conformation; the sequence is LLKSAETEKE…EVHTKVISEE (1097 aa). A phosphoserine mark is found at Ser-1093, Ser-1097, Ser-1163, and Ser-1238. The disordered stretch occupies residues 1154 to 1173; that stretch reads RLEEAGGATSAQIEMNKKRE. The residue at position 1242 (Thr-1242) is a Phosphothreonine. Position 1244 is a phosphoserine (Ser-1244). Position 1256 is a phosphothreonine (Thr-1256). Ser-1262 is subject to Phosphoserine. Phosphothreonine is present on Thr-1287. Phosphoserine is present on residues Ser-1289, Ser-1293, Ser-1304, and Ser-1307. Tyr-1465 is modified (phosphotyrosine). Position 1468 is a phosphothreonine (Thr-1468). Ser-1475 carries the phosphoserine modification. The residue at position 1493 (Tyr-1493) is a Phosphotyrosine. Position 1496 is a phosphoserine (Ser-1496). Thr-1502 carries the post-translational modification Phosphothreonine. Ser-1515 is modified (phosphoserine). A Phosphothreonine modification is found at Thr-1518. Ser-1543, Ser-1555, Ser-1575, Ser-1601, Ser-1715, and Ser-1727 each carry phosphoserine. A phosphothreonine mark is found at Thr-1731 and Thr-1737. At Ser-1740 the chain carries Phosphoserine. A disordered region spans residues 1884–1920; it reads KRQAEEAEEQSNTNLSKFRKLQHELEEAEERADIAES.

It belongs to the TRAFAC class myosin-kinesin ATPase superfamily. Myosin family. In terms of assembly, muscle myosin is a hexameric protein that consists of 2 heavy chain subunits (MHC), 2 alkali light chain subunits (MLC) and 2 regulatory light chain subunits (MLC-2). Interacts with GCSAM.

The protein resides in the cytoplasm. Its subcellular location is the myofibril. In terms of biological role, myosins are actin-based motor molecules with ATPase activity essential for muscle contraction. The sequence is that of Myosin-2 (MYH2) from Canis lupus familiaris (Dog).